Consider the following 2408-residue polypeptide: Protein ELYS (2408 aa).

A seven-bladed beta propeller repeats region spans residues 1-492 (MQNLEAQVTG…SGLIHFACTG (492 aa)). The tract at residues 1016-2408 (YSLPSLVWRE…AKPVTRRKMR (1393 aa)) is disordered. Over residues 1124 to 1145 (PLTSSDTDNNQTPHKSPLLKTS) the composition is skewed to polar residues. The span at 1457 to 1466 (NDQDSEEIEE) shows a compositional bias: acidic residues. Composition is skewed to polar residues over residues 1705–1719 (INEGQVSPNRDQSTL) and 1735–1750 (PADSSTDIIGNITLPT). Positions 2136-2149 (QASKIQEDLSDTPR) are enriched in basic and acidic residues. 2 sufficient for chromatin-binding regions span residues 2281-2359 (STQY…PVEI) and 2359-2408 (IKLI…RKMR). Residues 2281-2408 (STQYVFSPPS…AKPVTRRKMR (128 aa)) form a sufficient to block nuclear pore assembly region. A DNA-binding region (a.T hook) is located at residues 2329 to 2341 (SKPRGRPPKHKAK). Basic residues predominate over residues 2331-2348 (PRGRPPKHKAKAVTRVLK). The segment covering 2378-2389 (DSTEAKGAEKIS) has biased composition (basic and acidic residues).

Belongs to the ELYS family. In terms of assembly, interacts with the Nup107-160 subcomplex of the NPC.

Its subcellular location is the nucleus. The protein resides in the nuclear pore complex. The protein localises to the cytoplasm. It localises to the nucleoplasm. Its function is as follows. Required for the assembly of a functional nuclear pore complex (NPC) on the surface of chromosomes as nuclei form at the end of mitosis. May initiate NPC assembly by binding to chromatin and recruiting the Nup107-160 subcomplex, which may in turn recruit membrane vesicles containing pom121 and tmem48/ndc1. Association with chromatin may require the presence of the mcm2-mcm7 complex, suggesting a mechanism for coordination of nuclear assembly and the inactivation of replication licensing. This chain is Protein ELYS (ahctf1), found in Xenopus laevis (African clawed frog).